The primary structure comprises 73 residues: Capsid protein G8P (73 aa).

The first 23 residues, 1 to 23 (MKKSLVLKASVAVATLVPMLSFA), serve as a signal peptide directing secretion. The Periplasmic segment spans residues 24-47 (AEGDDPAKAAFNSLQASATEYIGY). A helical transmembrane segment spans residues 48–68 (AWAMVVVIVGATIGIKLFKKF). Residues 69 to 73 (TSKAS) lie on the Cytoplasmic side of the membrane.

The protein belongs to the inovirus capsid protein family. In terms of assembly, homomultimerizes. There are about 2,700 copies of this protein in the phage capsid.

It is found in the virion. It localises to the host cell inner membrane. Functionally, self assembles to form a helical capsid wrapping up the viral genomic DNA. The capsid displays a filamentous structure with a length of 760-1950 nm and a width of 6-8 nm. The virion assembly and budding take place at the host inner membrane. This Enterobacteria phage M13 (Bacteriophage M13) protein is Capsid protein G8P (VIII).